A 343-amino-acid polypeptide reads, in one-letter code: Phenylalanine--tRNA ligase alpha subunit (343 aa).

Glutamate 264 contributes to the Mg(2+) binding site.

The protein belongs to the class-II aminoacyl-tRNA synthetase family. Phe-tRNA synthetase alpha subunit type 1 subfamily. Tetramer of two alpha and two beta subunits. Mg(2+) serves as cofactor.

It localises to the cytoplasm. The enzyme catalyses tRNA(Phe) + L-phenylalanine + ATP = L-phenylalanyl-tRNA(Phe) + AMP + diphosphate + H(+). The polypeptide is Phenylalanine--tRNA ligase alpha subunit (Azoarcus sp. (strain BH72)).